A 487-amino-acid chain; its full sequence is MKALDELVFDNRFARLGDAFSTHVLPEPIDAPRLVVASESALALLDLAPEQSELPLFAEIFSGHKLWAEAEPRAMVYSGHQFGSYNPRLGDGRGLLLGEVYNDAGEHWDLHLKGAGRTPYSRMGDGRAVLRSSIREFLASEALHALGIPSSRAACVVSSNTPVWREKQEYAAMVLRLAQSHVRFGSLEYLFYTKQPEHLKTLAEHVLTMHYPHCQEQPEPYLAMFREIVERNAELIAKWQAYGFCHGVMNTDNMSILGITFDFGPFAFLDDFDEHFICNHSDHEGRYSFSNQVPIAQWNLSALGQALTPFVSVEALRETIGLFLPLYQAHYLDLMRRRLGLTVAQDQDDKLVSQLLQLMQNSGVDYTLFFRRLGDQPAAQALRALRDDFVDIKVFDDWAQAYQARIAAEENGTEQARKERMHAVNPLYILRNYLAQNAIEAAEKGDYEEVRRLHQVLCTPFTEQPGMEGYAQRPPDWGKHLEISCSS.

8 residues coordinate ATP: Gly90, Gly92, Arg93, Lys113, Asp125, Gly126, Arg176, and Arg183. Asp252 acts as the Proton acceptor in catalysis. Residues Asn253 and Asp262 each coordinate Mg(2+). Asp262 provides a ligand contact to ATP.

It belongs to the SELO family. The cofactor is Mg(2+). Mn(2+) is required as a cofactor.

The catalysed reaction is L-seryl-[protein] + ATP = 3-O-(5'-adenylyl)-L-seryl-[protein] + diphosphate. It catalyses the reaction L-threonyl-[protein] + ATP = 3-O-(5'-adenylyl)-L-threonyl-[protein] + diphosphate. It carries out the reaction L-tyrosyl-[protein] + ATP = O-(5'-adenylyl)-L-tyrosyl-[protein] + diphosphate. The enzyme catalyses L-histidyl-[protein] + UTP = N(tele)-(5'-uridylyl)-L-histidyl-[protein] + diphosphate. The catalysed reaction is L-seryl-[protein] + UTP = O-(5'-uridylyl)-L-seryl-[protein] + diphosphate. It catalyses the reaction L-tyrosyl-[protein] + UTP = O-(5'-uridylyl)-L-tyrosyl-[protein] + diphosphate. In terms of biological role, nucleotidyltransferase involved in the post-translational modification of proteins. It can catalyze the addition of adenosine monophosphate (AMP) or uridine monophosphate (UMP) to a protein, resulting in modifications known as AMPylation and UMPylation. This is Protein nucleotidyltransferase YdiU from Pseudomonas syringae pv. tomato (strain ATCC BAA-871 / DC3000).